The primary structure comprises 305 residues: Coenzyme PQQ synthesis protein B (305 aa).

This sequence belongs to the PqqB family.

It participates in cofactor biosynthesis; pyrroloquinoline quinone biosynthesis. In terms of biological role, may be involved in the transport of PQQ or its precursor to the periplasm. In Methylobacillus flagellatus, this protein is Coenzyme PQQ synthesis protein B.